A 773-amino-acid polypeptide reads, in one-letter code: Polymeric immunoglobulin receptor (773 aa).

The first 18 residues, 1–18, serve as a signal peptide directing secretion; that stretch reads MALFLLTCLLAVFSAATA. The Extracellular portion of the chain corresponds to 19 to 647; that stretch reads QSSLLGPSSI…SASGQSGSAK (629 aa). The Ig-like V-type 1; required for binding to polymeric IgA and IgM domain maps to 25–131; that stretch reads PSSIFGPGEV…RGLDFGVNVL (107 aa). Cystine bridges form between C46-C115, C155-C225, C260-C324, C369-C438, and C478-C538. Residue K88 is glycosylated (N-linked (GlcNAc...) asparagine; in variant N-88). A glycan (N-linked (GlcNAc...) asparagine) is linked at N108. 4 Ig-like V-type domains span residues 138-232, 233-340, 352-455, and 461-557; these read PDDV…SDPT, AEEQ…TQLR, RSPP…LQIV, and PTID…VELT. N418 carries an N-linked (GlcNAc...) asparagine glycan. Residues 619 to 641 are disordered; that stretch reads AVQSAEDPASGSRASVDASSASG. Residues 632 to 641 are compositionally biased toward low complexity; the sequence is ASVDASSASG. A helical transmembrane segment spans residues 648-670; the sequence is VLISTLVPLGLVLAAGAMAVAIA. The Cytoplasmic segment spans residues 671-773; sequence RARHRRNVDR…AEHQDGPKEA (103 aa). Phosphoserine occurs at positions 682, 691, 698, and 744. Residues 725–746 are disordered; the sequence is ATATESTVEIEEPKKAKRSSKE. Residues 735–746 are compositionally biased toward basic and acidic residues; that stretch reads EEPKKAKRSSKE.

Interacts (mainly via CDR1-like domain) with dimeric IgA. Interacts (mainly via CDR2-like domain) with pentameric IgM. As to quaternary structure, either free or part of the secretory IgA (sIgA) complex that consists of two, four or five IgA monomers, and two additional non-Ig polypeptides, namely the JCHAIN and the secretory component (the proteolytic product of PIGR). Free secretory component interacts with bacterial antigens toxA of C.difficile and eae of E.coli. N-glycosylated. N-glycosylation is required for anchoring IgA molecules to mucus, but is not necessary for Ig binding.

It is found in the cell membrane. The protein localises to the secreted. Functionally, mediates selective transcytosis of polymeric IgA and IgM across mucosal epithelial cells. Binds polymeric IgA and IgM at the basolateral surface of epithelial cells. The complex is then transported across the cell to be secreted at the apical surface. During this process, a cleavage occurs that separates the extracellular (known as the secretory component) from the transmembrane segment. In terms of biological role, through its N-linked glycans ensures anchoring of secretory IgA (sIgA) molecules to mucus lining the epithelial surface to neutralize extracellular pathogens. On its own (free form) may act as a non-specific microbial scavenger to prevent pathogen interaction with epithelial cells. The sequence is that of Polymeric immunoglobulin receptor (PIGR) from Oryctolagus cuniculus (Rabbit).